The following is an 862-amino-acid chain: Cadherin-related family member 5 (862 aa).

An N-terminal signal peptide occupies residues 1-28 (MGAPALLWPPLLLPLLTVLFGHLPGTLA). At 29–671 (QAQVCSANQT…GQRFSTVDMA (643 aa)) the chain is on the extracellular side. N-linked (GlcNAc...) asparagine glycosylation is found at N36, N45, N135, N173, N201, N311, N408, N438, and N479. Cadherin domains follow at residues 40–127 (FTMN…APEF), 128–240 (PFTI…TPWF), 252–357 (IQAQ…PLQF), and 358–462 (SQSL…PPST). Positions 452–658 (IQVSEREPPS…TTGPISGVGE (207 aa)) are disordered. Over residues 461–500 (STESPTPPEAGGTTGPSSNTTLETPSTSGTSQGPATTSSG) the composition is skewed to low complexity. The span at 529–652 (LGISTSPQTA…GTSQPTTTGP (124 aa)) shows a compositional bias: polar residues. 3 consecutive repeat copies span residues 545–575 (TQTPKPGTSQPMVPTPGASTSSQPATPSGSS), 576–606 (TQTPKPGTSQPMVPTPGASTSSQPATPSGSS), and 607–636 (TQTPRPGTSQPMVPTPGASTSSQPATPSGS). The 4 X 31 AA approximate tandem repeats stretch occupies residues 545-648 (TQTPKPGTSQ…TPKPGTSQPT (104 aa)). The stretch at 637-648 (TQTPKPGTSQPT) is one 4; truncated repeat. Residues 672–692 (VLGGVLGALLLLALIFLIILI) form a helical membrane-spanning segment. Residues 693–862 (HKHYRHRFTC…LGAVADNTYV (170 aa)) are Cytoplasmic-facing. The mediates interaction with USH1C and MYO7B and is required for proper localization to microvilli tips and function in microvilli organization stretch occupies residues 693-862 (HKHYRHRFTC…LGAVADNTYV (170 aa)). Disordered regions lie at residues 706–803 (KAKE…EGGY) and 821–862 (LNEP…NTYV). A phosphoserine mark is found at S729, S751, and S755. Pro residues predominate over residues 739–768 (GPEPVQPPLRPPSPMSSSPTPPSSMPPSPQ). T758 is subject to Phosphothreonine. Phosphoserine is present on residues S766 and S783. Basic and acidic residues predominate over residues 791–801 (LTKERRPEGEG). T825 carries the post-translational modification Phosphothreonine. Low complexity predominate over residues 827 to 837 (DVDSASASGSE). Phosphoserine occurs at positions 832, 834, and 836.

Part of the IMAC/intermicrovillar adhesion complex/intermicrovillar tip-link complex composed of ANKS4B, MYO7B, USH1C, CDHR2 and CDHR5. Interacts (via cytoplasmic domain) with USH1C and MYO7B; required for proper localization of CDHR5 to microvilli tips and its function in brush border differentiation. N- and O-glycosylated. Expressed predominantly in kidney. Also detected in lung and small intestine.

Its subcellular location is the apical cell membrane. It localises to the cell projection. It is found in the microvillus membrane. Intermicrovillar adhesion molecule that forms, via its extracellular domain, calcium-dependent heterophilic complexes with CDHR2 on adjacent microvilli. Thereby, controls the packing of microvilli at the apical membrane of epithelial cells. Through its cytoplasmic domain, interacts with microvillus cytoplasmic proteins to form the intermicrovillar adhesion complex/IMAC. This complex plays a central role in microvilli and epithelial brush border differentiation. In Rattus norvegicus (Rat), this protein is Cadherin-related family member 5.